The following is a 165-amino-acid chain: LIM domain transcription factor LMO4 (165 aa).

2 LIM zinc-binding domains span residues 23-83 and 87-147; these read CAGC…LFGN and CSAC…ALIN.

In terms of assembly, interacts strongly with LDBS. Interacts with LDB2 and LDB1. Interaction with complexes consisting of at least LDB1 and LHX3 acts to disassemble the complex; may preferentially disassemble LDB1-LHX3 complexes rather than complexes consisting of LDB1, LHX3 and ISL1. Interacts (via the LIM zinc-binding domain 1) with RBBP8. Interacts with both RPPB8 and LDB1 through the same face and cannot bind to both proteins simultaneously. Interacts with BRCA1 (via the BRCT domains); the interaction represses BRCA1 transcriptional activity. Interacts with DEAF1; LMO4 blocks export from nucleus.

In terms of biological role, transcription cofactor. Plays a role in establishing motor neuron identity, in concert with MNX1, acting, at least in part, to disrupt LDB1-LHX3 complexes thereby negatively modulating interneuron genes in motor neurons. The chain is LIM domain transcription factor LMO4 (LMO4) from Bos taurus (Bovine).